Reading from the N-terminus, the 514-residue chain is Phospholipase C D (514 aa).

The segment at residues Met1–Ala37 is a signal peptide (tat-type signal). Residues Val492–Cys514 form a disordered region.

This sequence belongs to the bacterial phospholipase C family. In terms of processing, predicted to be exported by the Tat system. The position of the signal peptide cleavage has not been experimentally proven.

The protein resides in the secreted. It localises to the cell wall. It carries out the reaction a 1,2-diacyl-sn-glycero-3-phosphocholine + H2O = phosphocholine + a 1,2-diacyl-sn-glycerol + H(+). Its function is as follows. Involved in virulence. Induces cytotoxic effects on mouse macrophage cell lines, via direct or indirect enzymatic hydrolysis of cell membrane phospholipids. Hydrolyzes phosphatidylcholine. The protein is Phospholipase C D of Mycobacterium tuberculosis (strain CDC 1551 / Oshkosh).